Here is a 199-residue protein sequence, read N- to C-terminus: Cytochrome b (199 aa).

4 helical membrane passes run 1–8 (LTGLFLAM), 32–53 (WLIR…YFHI), 68–88 (WNIG…GYVL), and 133–153 (FFAF…LHLL). 2 residues coordinate heme b: His-38 and His-52. Residues His-137 and His-151 each contribute to the heme b site. Position 156 (His-156) interacts with a ubiquinone. The chain crosses the membrane as a helical span at residues 181 to 199 (YKDLLGFAILLVALASLAH).

Belongs to the cytochrome b family. As to quaternary structure, the cytochrome bc1 complex contains 3 respiratory subunits (MT-CYB, CYC1 and UQCRFS1), 2 core proteins (UQCRC1 and UQCRC2) and probably 6 low-molecular weight proteins. Requires heme b as cofactor.

The protein localises to the mitochondrion inner membrane. Component of the ubiquinol-cytochrome c reductase complex (complex III or cytochrome b-c1 complex) that is part of the mitochondrial respiratory chain. The b-c1 complex mediates electron transfer from ubiquinol to cytochrome c. Contributes to the generation of a proton gradient across the mitochondrial membrane that is then used for ATP synthesis. The protein is Cytochrome b (mt-cyb) of Sarda chiliensis (Pacific bonito).